The chain runs to 108 residues: MAKNRSRRLRKKMHIDEFQELGFSVAWRFPEGTSEEQIDKTVDDFINEVIEPNKLAFDGSGYLAWEGLICMQEIGKCTEEHQAIVRKWLEERKLDEVRTSELFDVWWD.

The protein to H.influenzae HI_0341.

This is an uncharacterized protein from Escherichia coli (strain K12).